The sequence spans 325 residues: MEKNTSQTIFSNFFLLLLLSSCVSAQLRTGFYQNSCPNVETIVRNAVRQKFQQTFVTAPATLRLFFHDCFVRGCDASIMIASPSERDHPDDMSLAGDGFDTVVKAKQAVDSNPNCRNKVSCADILALATREVVVLTGGPSYPVELGRRDGRISTKASVQSQLPQPEFNLNQLNGMFSRHGLSQTDMIALSGAHTIGFAHCGKMSKRIYNFSPTTRIDPSINRGYVVQLKQMCPIGVDVRIAINMDPTSPRTFDNAYFKNLQQGKGLFTSDQILFTDQRSRSTVNSFANSEGAFRQAFITAITKLGRVGVLTGNAGEIRRDCSRVN.

Positions 1–25 (MEKNTSQTIFSNFFLLLLLSSCVSA) are cleaved as a signal peptide. 4 disulfide bridges follow: Cys36/Cys115, Cys69/Cys74, Cys121/Cys321, and Cys200/Cys232. Residue His67 is the Proton acceptor of the active site. Ca(2+)-binding residues include Asp68, Val71, Gly73, Asp75, and Ser77. Residue Pro163 coordinates substrate. His193 lines the heme b pocket. Thr194 serves as a coordination point for Ca(2+). Ca(2+) contacts are provided by Asp245, Ser248, and Asp253.

The protein belongs to the peroxidase family. Classical plant (class III) peroxidase subfamily. It depends on heme b as a cofactor. The cofactor is Ca(2+). Slightly expressed in roots.

It is found in the secreted. It carries out the reaction 2 a phenolic donor + H2O2 = 2 a phenolic radical donor + 2 H2O. Removal of H(2)O(2), oxidation of toxic reductants, biosynthesis and degradation of lignin, suberization, auxin catabolism, response to environmental stresses such as wounding, pathogen attack and oxidative stress. These functions might be dependent on each isozyme/isoform in each plant tissue. The sequence is that of Peroxidase 45 (PER45) from Arabidopsis thaliana (Mouse-ear cress).